A 252-amino-acid polypeptide reads, in one-letter code: PF03932 family protein CutC (252 aa).

It belongs to the CutC family.

The protein resides in the cytoplasm. The sequence is that of PF03932 family protein CutC from Serratia proteamaculans (strain 568).